A 265-amino-acid polypeptide reads, in one-letter code: Hydroxyethylthiazole kinase (265 aa).

M50 is a binding site for substrate. R125 and T171 together coordinate ATP. G198 provides a ligand contact to substrate.

The protein belongs to the Thz kinase family. Mg(2+) is required as a cofactor.

It carries out the reaction 5-(2-hydroxyethyl)-4-methylthiazole + ATP = 4-methyl-5-(2-phosphooxyethyl)-thiazole + ADP + H(+). The protein operates within cofactor biosynthesis; thiamine diphosphate biosynthesis; 4-methyl-5-(2-phosphoethyl)-thiazole from 5-(2-hydroxyethyl)-4-methylthiazole: step 1/1. Catalyzes the phosphorylation of the hydroxyl group of 4-methyl-5-beta-hydroxyethylthiazole (THZ). In Salmonella paratyphi B (strain ATCC BAA-1250 / SPB7), this protein is Hydroxyethylthiazole kinase.